Here is a 601-residue protein sequence, read N- to C-terminus: Glutamyl-tRNA(Gln) amidotransferase subunit B, mitochondrial (601 aa).

Residues 1-52 (MLQQWLRQSPRAARVLRGSCCRGPQSGSLRHSPLPTAPHRCIRSLQTSATES) constitute a mitochondrion transit peptide.

This sequence belongs to the GatB/GatE family. GatB subfamily. As to quaternary structure, subunit of the heterotrimeric GatCAB amidotransferase (AdT) complex, composed of A, B and C subunits.

It is found in the mitochondrion. It carries out the reaction L-glutamyl-tRNA(Gln) + L-glutamine + ATP + H2O = L-glutaminyl-tRNA(Gln) + L-glutamate + ADP + phosphate + H(+). Allows the formation of correctly charged Gln-tRNA(Gln) through the transamidation of misacylated Glu-tRNA(Gln) in the mitochondria. The reaction takes place in the presence of glutamine and ATP through an activated gamma-phospho-Glu-tRNA(Gln). The chain is Glutamyl-tRNA(Gln) amidotransferase subunit B, mitochondrial from Aspergillus fumigatus (strain ATCC MYA-4609 / CBS 101355 / FGSC A1100 / Af293) (Neosartorya fumigata).